The following is a 471-amino-acid chain: Nuclear receptor subfamily 0 group B member 1 (471 aa).

Tandem repeats lie at residues 1-67 (MAGE…YRCC), 68-134 (FCGE…YRCC), and 135-201 (FCGE…YRCC). The 4 X 67 AA tandem repeats stretch occupies residues 1–253 (MAGEDHQWQG…QRVALKSPQV (253 aa)). 3 short sequence motifs (LXXLL motif) span residues 13 to 17 (LYNML), 80 to 84 (LYNML), and 147 to 151 (LYSLL). A 4; truncated repeat occupies 202-253 (FCGEDHPRQSGILCNMPMSAKQTHVAPEAQPGAPWWDPSCAAQRVALKSPQV). In terms of domain architecture, NR LBD spans 210–470 (QSGILCNMPM…DMMLEMLCAK (261 aa)). The short motif at 462 to 467 (MMLEML) is the AF-2 motif element.

Belongs to the nuclear hormone receptor family. NR0 subfamily. In terms of assembly, homodimer. Interacts with NR5A1, NR5A2, NR0B2 and with COPS2. Interacts with ESRRB; represses ESRRB activity at the GATA6 promoter.

The protein localises to the nucleus. It is found in the cytoplasm. In terms of biological role, nuclear receptor that lacks a DNA-binding domain and acts as a corepressor that inhibits the transcriptional activity of other nuclear receptors through heterodimeric interactions. Component of a cascade required for the development of the hypothalamic-pituitary-adrenal-gonadal axis. May also have a role in the development of the embryo and in the maintenance of embryonic stem cell pluripotency. In Sus scrofa (Pig), this protein is Nuclear receptor subfamily 0 group B member 1 (NR0B1).